A 298-amino-acid chain; its full sequence is Probable tRNA(His) guanylyltransferase (298 aa).

Positions 58, 59, and 105 each coordinate Mg(2+). Residues 58-63 and 104-105 contribute to the GTP site; these read DGRNFH and SD.

This sequence belongs to the tRNA(His) guanylyltransferase family. As to quaternary structure, homotetramer. Interacts with MFN1 and MFN2; functions as a guanyl-nucleotide exchange factor/GEF for MFN2 and also probably MFN1. The cofactor is Mg(2+).

Its subcellular location is the cytoplasm. The protein localises to the mitochondrion. The catalysed reaction is a 5'-end ribonucleotide-tRNA(His) + GTP + ATP + H2O = a 5'-end phospho-guanosine-ribonucleotide-tRNA(His) + AMP + 2 diphosphate + H(+). Its function is as follows. Adds a GMP to the 5'-end of tRNA(His) after transcription and RNase P cleavage. This step is essential for proper recognition of the tRNA and for the fidelity of protein synthesis. Also functions as a guanyl-nucleotide exchange factor/GEF for the MFN1 and MFN2 mitofusins thereby regulating mitochondrial fusion. By regulating both mitochondrial dynamics and bioenergetic function, it contributes to cell survival following oxidative stress. The protein is Probable tRNA(His) guanylyltransferase (Thg1l) of Mus musculus (Mouse).